Consider the following 1334-residue polypeptide: Rho1 guanine nucleotide exchange factor 1 (1334 aa).

Disordered regions lie at residues 1–89 (MDYR…ASPV), 135–182 (PQVS…SDSV), 203–245 (LDQN…TSGT), and 381–402 (SLIN…ASSP). Residues 138 to 149 (SNHAPNNSNSPS) show a composition bias toward low complexity. The segment covering 150-164 (LTWHTSSGDDSNQNP) has biased composition (polar residues). Over residues 170-180 (QSQSSTSPVSD) the composition is skewed to low complexity. Composition is skewed to polar residues over residues 213–227 (VRSS…NSRL), 234–245 (HTVGSHSFTSGT), and 381–400 (SLIN…SEAS). Ser381 is modified (phosphoserine). Residues 621 to 808 (KRQEVICEVI…RGFLSRLNVE (188 aa)) form the DH domain. The PH domain occupies 843–973 (QLIFKGPLKK…WLEHIDNQQT (131 aa)). The 299-residue stretch at 995-1293 (DNKVNAIGVY…RLLADGRGKL (299 aa)) folds into the CNH domain.

It is found in the cytoplasm. In terms of biological role, stimulates the exchange of Rho1 and Rho5 GDP-bound form into GTP-bound form. Controls septum formation, cell wall synthesis and localization of F-actin patches. Coordinates actin deposition with cell wall biosynthesis during bipolar growth. The protein is Rho1 guanine nucleotide exchange factor 1 (rgf1) of Schizosaccharomyces pombe (strain 972 / ATCC 24843) (Fission yeast).